A 156-amino-acid chain; its full sequence is Small ribosomal subunit protein uS7 (156 aa).

Belongs to the universal ribosomal protein uS7 family. As to quaternary structure, part of the 30S ribosomal subunit. Contacts proteins S9 and S11.

Its function is as follows. One of the primary rRNA binding proteins, it binds directly to 16S rRNA where it nucleates assembly of the head domain of the 30S subunit. Is located at the subunit interface close to the decoding center, probably blocks exit of the E-site tRNA. The sequence is that of Small ribosomal subunit protein uS7 from Magnetococcus marinus (strain ATCC BAA-1437 / JCM 17883 / MC-1).